We begin with the raw amino-acid sequence, 506 residues long: Dipeptide and tripeptide permease A (506 aa).

At 1–36 (MSTANNNSESTESVSMNAFKQPKAFYLIFSIELWER) the chain is on the cytoplasmic side. The chain crosses the membrane as a helical span at residues 37 to 57 (FGYYGLQGIMAVYLVKMLGMS). The Periplasmic portion of the chain corresponds to 58 to 61 (ETDS). Residues 62–82 (ITLFSSFSALVYGFVAIGGWL) form a helical membrane-spanning segment. The Cytoplasmic portion of the chain corresponds to 83–91 (GDKVLGTKR). Helical transmembrane passes span 92 to 112 (VIVLGAIVLAIGYTMIAYSGH) and 113 to 133 (SVAWVYIGMATIAVGNGLFKA). Residues 134–155 (NPSALLSTCYAKDDPRLDGAFT) are Cytoplasmic-facing. A helical transmembrane segment spans residues 156-176 (MYYMAVNIGSFFSMLATPVLA). Residues 177 to 180 (ANYG) lie on the Periplasmic side of the membrane. The helical transmembrane segment at 181–201 (WSVAFSLSVVGMILTLVNFMF) threads the bilayer. Residues 202-222 (CRKWVSTQGSQPDFQPINLKK) are Cytoplasmic-facing. The chain crosses the membrane as a helical span at residues 223 to 243 (LVITLAGIVVLVALSTWLLHN). At 244 to 248 (QGVAR) the chain is on the periplasmic side. The chain crosses the membrane as a helical span at residues 249 to 269 (WILTIISLAVVAIFIKEMLAV). Residues 270–276 (SGAERRK) are Cytoplasmic-facing. The chain crosses the membrane as a helical span at residues 277–297 (MIVALLLMLEAVVFFVLYNQM). The Periplasmic portion of the chain corresponds to 298–322 (PTSLNFFAIRNVEHSILGFAFEPEQ). The chain crosses the membrane as a helical span at residues 323–343 (YQALNPFWIMVASPLLAAVYN). Topologically, residues 344-354 (KMGDQLPMAHK) are cytoplasmic. A helical transmembrane segment spans residues 355–375 (FAIGMVLCSGAFLVLPWGASM). Topologically, residues 376 to 385 (ANEQGIVSVN) are periplasmic. Residues 386-406 (WLILCYGLQSIGELMISGLGL) traverse the membrane as a helical segment. Residues 407 to 416 (AMVAQLVPQR) are Cytoplasmic-facing. Residues 417 to 437 (LMGFIMGAWFLTSAGAAIIAG) form a helical membrane-spanning segment. Topologically, residues 438 to 461 (YVANMMAVPENVVDPHVSLEVYSN) are periplasmic. A helical transmembrane segment spans residues 462 to 482 (VFMQIGIVTGIIAVLMMLTAP). Residues 483–506 (KLTRMTQDVATDVPADAATTTASA) are Cytoplasmic-facing.

This sequence belongs to the major facilitator superfamily. Proton-dependent oligopeptide transporter (POT/PTR) (TC 2.A.17) family. DtpA subfamily.

Its subcellular location is the cell inner membrane. Its function is as follows. Proton-dependent permease that transports di- and tripeptides. The protein is Dipeptide and tripeptide permease A of Pectobacterium carotovorum subsp. carotovorum (strain PC1).